The primary structure comprises 480 residues: Protein nucleotidyltransferase YdiU (480 aa).

Residues G86, G88, R89, K109, D121, G122, R172, and R179 each coordinate ATP. Catalysis depends on D248, which acts as the Proton acceptor. 2 residues coordinate Mg(2+): N249 and D258. An ATP-binding site is contributed by D258.

The protein belongs to the SELO family. Mg(2+) is required as a cofactor. Mn(2+) serves as cofactor.

The catalysed reaction is L-seryl-[protein] + ATP = 3-O-(5'-adenylyl)-L-seryl-[protein] + diphosphate. It catalyses the reaction L-threonyl-[protein] + ATP = 3-O-(5'-adenylyl)-L-threonyl-[protein] + diphosphate. The enzyme catalyses L-tyrosyl-[protein] + ATP = O-(5'-adenylyl)-L-tyrosyl-[protein] + diphosphate. It carries out the reaction L-histidyl-[protein] + UTP = N(tele)-(5'-uridylyl)-L-histidyl-[protein] + diphosphate. The catalysed reaction is L-seryl-[protein] + UTP = O-(5'-uridylyl)-L-seryl-[protein] + diphosphate. It catalyses the reaction L-tyrosyl-[protein] + UTP = O-(5'-uridylyl)-L-tyrosyl-[protein] + diphosphate. Functionally, nucleotidyltransferase involved in the post-translational modification of proteins. It can catalyze the addition of adenosine monophosphate (AMP) or uridine monophosphate (UMP) to a protein, resulting in modifications known as AMPylation and UMPylation. This is Protein nucleotidyltransferase YdiU from Salmonella choleraesuis (strain SC-B67).